The following is a 481-amino-acid chain: GTPase Der (481 aa).

EngA-type G domains follow at residues 3 to 166 (PVVA…ESDF) and 194 to 367 (IKLA…MSAT). GTP is bound by residues 9 to 16 (GRPNVGKS), 56 to 60 (DTGGI), 118 to 121 (NKVD), 200 to 207 (GKPNVGKS), 247 to 251 (DTAGV), and 312 to 315 (NKWD). The 85-residue stretch at 368–452 (KRINTALLTQ…PIKIEFREGN (85 aa)) folds into the KH-like domain.

Belongs to the TRAFAC class TrmE-Era-EngA-EngB-Septin-like GTPase superfamily. EngA (Der) GTPase family. As to quaternary structure, associates with the 50S ribosomal subunit.

In terms of biological role, GTPase that plays an essential role in the late steps of ribosome biogenesis. In Alteromonas mediterranea (strain DSM 17117 / CIP 110805 / LMG 28347 / Deep ecotype), this protein is GTPase Der.